Reading from the N-terminus, the 215-residue chain is Pyridoxine/pyridoxamine 5'-phosphate oxidase (215 aa).

Substrate is bound by residues 9 to 12 and Lys69; that span reads RRDY. FMN contacts are provided by residues 64-69, 79-80, Lys86, and Gln108; these read RVLLLK and FT. Residues Tyr126, Arg130, and Ser134 each contribute to the substrate site. Residues 143–144 and Trp188 contribute to the FMN site; that span reads QS. Residue 194 to 196 coordinates substrate; it reads RLH. Arg198 provides a ligand contact to FMN.

This sequence belongs to the pyridoxamine 5'-phosphate oxidase family. Homodimer. Requires FMN as cofactor.

It carries out the reaction pyridoxamine 5'-phosphate + O2 + H2O = pyridoxal 5'-phosphate + H2O2 + NH4(+). It catalyses the reaction pyridoxine 5'-phosphate + O2 = pyridoxal 5'-phosphate + H2O2. Its pathway is cofactor metabolism; pyridoxal 5'-phosphate salvage; pyridoxal 5'-phosphate from pyridoxamine 5'-phosphate: step 1/1. It participates in cofactor metabolism; pyridoxal 5'-phosphate salvage; pyridoxal 5'-phosphate from pyridoxine 5'-phosphate: step 1/1. Catalyzes the oxidation of either pyridoxine 5'-phosphate (PNP) or pyridoxamine 5'-phosphate (PMP) into pyridoxal 5'-phosphate (PLP). The sequence is that of Pyridoxine/pyridoxamine 5'-phosphate oxidase from Pseudomonas syringae pv. syringae (strain B728a).